The following is a 467-amino-acid chain: Glutamate--tRNA ligase (467 aa).

A 'HIGH' region motif is present at residues 13-23 (PSPTGYLHVGG). Residues 245-249 (KLSKR) carry the 'KMSKS' region motif. Lysine 248 lines the ATP pocket.

The protein belongs to the class-I aminoacyl-tRNA synthetase family. Glutamate--tRNA ligase type 1 subfamily. As to quaternary structure, monomer.

It localises to the cytoplasm. It catalyses the reaction tRNA(Glu) + L-glutamate + ATP = L-glutamyl-tRNA(Glu) + AMP + diphosphate. In terms of biological role, catalyzes the attachment of glutamate to tRNA(Glu) in a two-step reaction: glutamate is first activated by ATP to form Glu-AMP and then transferred to the acceptor end of tRNA(Glu). The chain is Glutamate--tRNA ligase from Herminiimonas arsenicoxydans.